A 92-amino-acid chain; its full sequence is C-C motif chemokine 3 (92 aa).

The N-terminal stretch at 1-19 (MKVPGAALAVLLCTMSLCS) is a signal peptide. 2 disulfide bridges follow: C33-C57 and C34-C73.

The protein belongs to the intercrine beta (chemokine CC) family. In terms of assembly, self-associates. Also heterodimer of MIP-1-alpha(4-69) and MIP-1-beta(3-69). Interacts with CCR1.

It localises to the secreted. Monokine with inflammatory and chemokinetic properties. Binds to CCR1, CCR4 and CCR5. One of the major HIV-suppressive factors produced by CD8+ T-cells. Recombinant MIP-1-alpha induces a dose-dependent inhibition of different strains of HIV-1, HIV-2, and simian immunodeficiency virus (SIV). In Canis lupus familiaris (Dog), this protein is C-C motif chemokine 3 (CCL3).